A 605-amino-acid chain; its full sequence is Apoptosis-inducing factor 3 (605 aa).

Residues valine 18–leucine 29 show a composition bias toward basic and acidic residues. The segment at valine 18–glycine 44 is disordered. In terms of domain architecture, Rieske spans alanine 70–isoleucine 165. [2Fe-2S] cluster is bound by residues cysteine 109, histidine 111, cysteine 128, and histidine 131. FAD contacts are provided by residues glycine 201–alanine 205, arginine 235, lysine 240, valine 270, aspartate 467, and tryptophan 514.

This sequence belongs to the FAD-dependent oxidoreductase family.

The protein localises to the mitochondrion. Its function is as follows. Induces apoptosis through a caspase dependent pathway. Reduces mitochondrial membrane potential. In Mus musculus (Mouse), this protein is Apoptosis-inducing factor 3 (Aifm3).